A 63-amino-acid polypeptide reads, in one-letter code: Sec-independent protein translocase protein TatA (63 aa).

The chain crosses the membrane as a helical span at residues 1–21 (MGSFSMWHWLIVLVIVLLLFG). The disordered stretch occupies residues 42–63 (GMTDEDAPDTAKTVDHKADETK). Basic and acidic residues predominate over residues 53-63 (KTVDHKADETK).

The protein belongs to the TatA/E family. The Tat system comprises two distinct complexes: a TatABC complex, containing multiple copies of TatA, TatB and TatC subunits, and a separate TatA complex, containing only TatA subunits. Substrates initially bind to the TatABC complex, which probably triggers association of the separate TatA complex to form the active translocon.

The protein resides in the cell inner membrane. Its function is as follows. Part of the twin-arginine translocation (Tat) system that transports large folded proteins containing a characteristic twin-arginine motif in their signal peptide across membranes. TatA could form the protein-conducting channel of the Tat system. This chain is Sec-independent protein translocase protein TatA, found in Rhizobium leguminosarum bv. trifolii (strain WSM2304).